The chain runs to 244 residues: MQIIPAIDLKDGKCVRLRQGKFSEVTVYYDNPEDAALRWQNEGAEVLHVVDLDGAKEGKIGNLPSIKKIREAFRGNIEVGGGIRRIEDIELLLSVGIDRVIVGTIAVQSPDFVKEVCKRFPKKIIVGIDAKDGLVAVKGWVEVTEIRAIELALKMQDYGIWGIIYTDISRDGMLTGPNIEATKALVESVKVPVIASGGVSSIEDIRKLAEIPQLWGVITGKAIYSGAIDLKEALRIIKGDGVKK.

The active-site Proton acceptor is D8. D129 acts as the Proton donor in catalysis.

It belongs to the HisA/HisF family.

The protein localises to the cytoplasm. The catalysed reaction is 1-(5-phospho-beta-D-ribosyl)-5-[(5-phospho-beta-D-ribosylamino)methylideneamino]imidazole-4-carboxamide = 5-[(5-phospho-1-deoxy-D-ribulos-1-ylimino)methylamino]-1-(5-phospho-beta-D-ribosyl)imidazole-4-carboxamide. It functions in the pathway amino-acid biosynthesis; L-histidine biosynthesis; L-histidine from 5-phospho-alpha-D-ribose 1-diphosphate: step 4/9. The sequence is that of 1-(5-phosphoribosyl)-5-[(5-phosphoribosylamino)methylideneamino] imidazole-4-carboxamide isomerase from Thermodesulfovibrio yellowstonii (strain ATCC 51303 / DSM 11347 / YP87).